A 442-amino-acid chain; its full sequence is Tryptophan synthase beta chain 2 (442 aa).

Lys122 bears the N6-(pyridoxal phosphate)lysine mark.

The protein belongs to the TrpB family. As to quaternary structure, tetramer of two alpha and two beta chains. Pyridoxal 5'-phosphate serves as cofactor.

It catalyses the reaction (1S,2R)-1-C-(indol-3-yl)glycerol 3-phosphate + L-serine = D-glyceraldehyde 3-phosphate + L-tryptophan + H2O. The protein operates within amino-acid biosynthesis; L-tryptophan biosynthesis; L-tryptophan from chorismate: step 5/5. In terms of biological role, the beta subunit is responsible for the synthesis of L-tryptophan from indole and L-serine. The sequence is that of Tryptophan synthase beta chain 2 (trpB2) from Methanosarcina mazei (strain ATCC BAA-159 / DSM 3647 / Goe1 / Go1 / JCM 11833 / OCM 88) (Methanosarcina frisia).